The following is a 567-amino-acid chain: Probable diguanylate cyclase DgcQ (567 aa).

Transmembrane regions (helical) follow at residues Phe-20–Leu-40 and Ile-357–Ile-377. The GGDEF domain maps to Gln-425–Ala-560. Residue Asp-433 coordinates Mg(2+). 3 residues coordinate substrate: Asn-441, His-446, and Asp-450. A Mg(2+)-binding site is contributed by Glu-476. Residue Glu-476 is the Proton acceptor of the active site.

Homodimer. Requires Mg(2+) as cofactor.

It localises to the cell inner membrane. It carries out the reaction 2 GTP = 3',3'-c-di-GMP + 2 diphosphate. It functions in the pathway glycan metabolism; bacterial cellulose biosynthesis. The protein operates within purine metabolism; 3',5'-cyclic di-GMP biosynthesis. In terms of biological role, catalyzes the synthesis of cyclic-di-GMP (c-di-GMP) via the condensation of 2 GTP molecules. Cyclic-di-GMP is a second messenger which controls cell surface-associated traits in bacteria. Involved in the regulation of cellulose production. The protein is Probable diguanylate cyclase DgcQ of Salmonella typhi.